A 213-amino-acid chain; its full sequence is MSRLIIAFIVVTMVCSAIALPKKKVEPLEKDEKRSLAVAGAVIEGGNLVMSVLDRILEAIGDVNRKIAIGVENQSGKSWTAMNTYFRSGTSDVVLPHSVPSGKALLYDGQKTRGPVATGVVGVFAYAMSDGNTLAVMFSIPYDYNLYSNWWNVKTYSGMKRADQSMYEDLYYHASPFKGDNGWHSRNLGYGLKCRGFMNSSGAAKLEIHVSRA.

A signal peptide spans 1–19 (MSRLIIAFIVVTMVCSAIA). A propeptide spanning residues 20–34 (LPKKKVEPLEKDEKR) is cleaved from the precursor. The plays an important role in the hemolytic activity stretch occupies residues 37–46 (AVAGAVIEGG). Residues 45–64 (GGNLVMSVLDRILEAIGDVN) are N-terminal region. 7 residues coordinate phosphocholine: S88, V121, S139, P141, Y167, Y171, and Y172. Positions 139 to 154 (SIPYDYNLYSNWWNVK) are trp-rich region, which is important for the binding to lipid membrane. A Cell attachment site, crucial for protein stability motif is present at residues 178-180 (KGD).

Belongs to the actinoporin family. Sea anemone subfamily. Octamer or nonamer in membranes. Monomer in the soluble state.

The protein localises to the secreted. It is found in the nematocyst. It localises to the target cell membrane. In terms of biological role, pore-forming protein that forms cation-selective hydrophilic pores of around 1 nm and causes cytolysis. Pore formation is a multi-step process that involves specific recognition of membrane sphingomyelin (but neither cholesterol nor phosphatidylcholine) using aromatic rich region and adjacent phosphocholine (POC) binding site, firm binding to the membrane (mainly driven by hydrophobic interactions) accompanied by the transfer of the N-terminal region to the lipid-water interface and finally pore formation after oligomerization of monomers. This protein shows potent hemolytic activity (EC(50)=8.8 ng/ml) that is specifically inhibited by sphingomyelin. Shows no phospholipase A2 activity, nor antimicrobial activity against the four bacteria tested. Is lethal to crayfish. The polypeptide is DELTA-actitoxin-Aas1a (Anthopleura asiatica (Sea anemone)).